Here is a 486-residue protein sequence, read N- to C-terminus: Cardiolipin synthase A (486 aa).

2 consecutive transmembrane segments (helical) span residues 3–23 and 38–58; these read TFYT…IAGV and MAWL…YLSV. PLD phosphodiesterase domains follow at residues 219 to 246 and 399 to 426; these read MDLR…VDPR and EGGL…DMRS. Active-site residues include His-224, Lys-226, Asp-231, His-404, Lys-406, and Asp-411.

Belongs to the phospholipase D family. Cardiolipin synthase subfamily. ClsA sub-subfamily.

The protein localises to the cell inner membrane. The enzyme catalyses 2 a 1,2-diacyl-sn-glycero-3-phospho-(1'-sn-glycerol) = a cardiolipin + glycerol. Its function is as follows. Catalyzes the reversible phosphatidyl group transfer from one phosphatidylglycerol molecule to another to form cardiolipin (CL) (diphosphatidylglycerol) and glycerol. In Salmonella choleraesuis (strain SC-B67), this protein is Cardiolipin synthase A.